A 598-amino-acid chain; its full sequence is Aspartate--tRNA ligase (598 aa).

Glu173 serves as a coordination point for L-aspartate. Residues 197–200 (QLFK) are aspartate. Residue Arg219 participates in L-aspartate binding. ATP contacts are provided by residues 219–221 (RDE) and Gln228. His449 lines the L-aspartate pocket. ATP is bound at residue Glu483. Arg490 contacts L-aspartate. 535–538 (GLDR) is a binding site for ATP.

Belongs to the class-II aminoacyl-tRNA synthetase family. Type 1 subfamily. Homodimer.

It localises to the cytoplasm. It carries out the reaction tRNA(Asp) + L-aspartate + ATP = L-aspartyl-tRNA(Asp) + AMP + diphosphate. Functionally, catalyzes the attachment of L-aspartate to tRNA(Asp) in a two-step reaction: L-aspartate is first activated by ATP to form Asp-AMP and then transferred to the acceptor end of tRNA(Asp). This Shewanella halifaxensis (strain HAW-EB4) protein is Aspartate--tRNA ligase.